Reading from the N-terminus, the 667-residue chain is Zeaxanthin epoxidase, chloroplastic (667 aa).

The transit peptide at 1–59 (MGSTPFCYSINPSPSKLDFTRTHVFSPVSKQFYLDLSSFSGKPGGVSGFRSRRALLGVK) directs the protein to the chloroplast. FAD-binding positions include 82–110 (RVLV…LVFE) and 360–373 (GFTW…LLGD). Residues 558-612 (CIVGSEPDQDFPGMRIVIPSSQVSKMHARVIYKDGAFFLMDLRSEHGTYVTDNEG) form the FHA domain.

FAD is required as a cofactor. Expressed in leaves, stems and flowers, and at lower levels in roots and siliques.

The protein resides in the plastid. It localises to the chloroplast. It catalyses the reaction all-trans-zeaxanthin + 4 reduced [2Fe-2S]-[ferredoxin] + 2 O2 + 4 H(+) = all-trans-violaxanthin + 4 oxidized [2Fe-2S]-[ferredoxin] + 2 H2O. It functions in the pathway plant hormone biosynthesis; abscisate biosynthesis. Its function is as follows. Zeaxanthin epoxidase that plays an important role in the xanthophyll cycle and abscisic acid (ABA) biosynthesis. Converts zeaxanthin into antheraxanthin and subsequently violaxanthin. Required for resistance to osmotic and drought stresses, ABA-dependent stomatal closure, seed development and dormancy, modulation of defense gene expression and disease resistance and non-photochemical quencing (NPQ). Through its role in ABA biosynthesis, regulates the expression of stress-responsive genes such as RD29A during osmotic stress and is required for normal plant growth during vegetative development. Is required for late skotomorphogenic growth through its role in the xanthophyll carotenoids neoxanthin, violaxanthin and antheraxanthin biosynthesis. Required for beta-aminobutyric acid (BABA)-induced priming in disease resistance, tolerance to salt and drought stresses and sterility. Participates in NPQ by regulating the level of zeaxanthin in photosynthetic energy conversion. NPQ is a process that maintains the balance between dissipation and utilization of light energy to minimize the generation of oxidizing molecules and the molecular damages they can generate. The polypeptide is Zeaxanthin epoxidase, chloroplastic (ZEP) (Arabidopsis thaliana (Mouse-ear cress)).